Reading from the N-terminus, the 152-residue chain is Actin-related protein 2/3 complex subunit 5-B (152 aa).

The segment at 21–44 (NKFVDDQLQEEPAEPQGPDEAEVD) is disordered. The span at 27–43 (QLQEEPAEPQGPDEAEV) shows a compositional bias: acidic residues.

The protein belongs to the ARPC5 family. Component of the Arp2/3 complex composed of actr2/arp2, actr3/arp3, arpc1 (arpc1a or arpc1b), arpc2, arpc3, arpc4 and arpc5.

It is found in the cytoplasm. The protein resides in the cytoskeleton. The protein localises to the cell projection. Its subcellular location is the nucleus. Functionally, component of the Arp2/3 complex, a multiprotein complex that mediates actin polymerization upon stimulation by nucleation-promoting factor (NPF). The Arp2/3 complex mediates the formation of branched actin networks in the cytoplasm, providing the force for cell motility. In addition to its role in the cytoplasmic cytoskeleton, the Arp2/3 complex also promotes actin polymerization in the nucleus, thereby regulating gene transcription and repair of damaged DNA. The Arp2/3 complex promotes homologous recombination (HR) repair in response to DNA damage by promoting nuclear actin polymerization, leading to drive motility of double-strand breaks (DSBs). The protein is Actin-related protein 2/3 complex subunit 5-B (arpc5-b) of Xenopus laevis (African clawed frog).